Consider the following 1009-residue polypeptide: Glutamate receptor ionotropic, delta-2 (1009 aa).

An N-terminal signal peptide occupies residues 1-23 (MKVFPAVLFLITFWSLEWEPVLP). Residues 24–566 (DSIIHIGAIF…DMFACLAPFD (543 aa)) lie on the Extracellular side of the membrane. Asn-293, Asn-306, Asn-390, and Asn-426 each carry an N-linked (GlcNAc...) asparagine glycan. Ca(2+) contacts are provided by Glu-531, Val-534, and Asp-535. Residues 567-587 (LSLWACIAGTVLLVGTLVYLL) form a helical membrane-spanning segment. Topologically, residues 588–635 (NWLNPPRLPMGSVSSTTLYNSMWFVYGSFVQQGGEVPYTTLATRMMMG) are cytoplasmic. A helical transmembrane segment spans residues 636-656 (VWWLFALIVISSYTANLAAFL). The Extracellular segment spans residues 657–830 (TISRIENSIQ…KSGSALDIHS (174 aa)). N-linked (GlcNAc...) asparagine glycosylation is present at Asn-713. The Ca(2+) site is built by Asp-753, Asp-755, and Ser-757. Residues 831-851 (FAGVFFVLAAGVVLSCLIATV) form a helical membrane-spanning segment. At 852–1009 (ETWWTRRKGS…GNDPDRGTSI (158 aa)) the chain is on the cytoplasmic side. The interval 989–1009 (YQPTPAPNFSYGNDPDRGTSI) is disordered.

Belongs to the glutamate-gated ion channel (TC 1.A.10.1) family. GRID2 subfamily. In terms of assembly, tetramer; dimer of dimers. As to expression, expressed in cerebellar Purkinje cells, in crest cells in the medial octavolateral nucleus and in type I neurons of the optic tectum.

Its subcellular location is the postsynaptic cell membrane. The enzyme catalyses Ca(2+)(in) = Ca(2+)(out). It carries out the reaction Na(+)(in) = Na(+)(out). Member of the ionotropic glutamate receptor family, which plays a crucial role in synaptic organization and signal transduction in the central nervous system. Although it shares structural features with ionotropic glutamate receptors, does not bind glutamate as a primary ligand. Promotes synaptogenesis and mediates the D-Serine-dependent long term depression signals and AMPA receptor endocytosis of cerebellar parallel fiber-Purkinje cell (PF-PC) synapses through the NRX1B-CBLN1-GRID2 triad complex. In the presence of neurexins and cerebellins, forms cation-selective channels that are proposed to be gated by glycine and D-serine. However, recent research disputes this ligand-gated cation channel activity. Cation-selective ion channel activity can be triggered by GRM1 in Purkinje cells. The sequence is that of Glutamate receptor ionotropic, delta-2 from Danio rerio (Zebrafish).